The chain runs to 703 residues: Protein FAR1-RELATED SEQUENCE 6 (703 aa).

The disordered stretch occupies residues 1–29; that stretch reads MERSESVDEDVQASAYLENDEVRERDDPM. An FAR1 domain is found at 99–184; the sequence is NYYNCYASEV…TLDHNHLLGC (86 aa). One can recognise an MULE domain in the interval 297 to 392; sequence VIFIDSSYIS…SLTHIMRKIP (96 aa). An SWIM-type zinc finger spans residues 584-620; the sequence is FEVLYNRSVGEVRCICSCFNFYGYLCRHALCVLNFNG.

It belongs to the FHY3/FAR1 family. In terms of tissue distribution, expressed in hypocotyls, rosette and cauline leaves, inflorescences stems, flowers and siliques.

The protein resides in the nucleus. In terms of biological role, putative transcription activator involved in regulating light control of development. May have a role in controlling flowering time. The sequence is that of Protein FAR1-RELATED SEQUENCE 6 (FRS6) from Arabidopsis thaliana (Mouse-ear cress).